Reading from the N-terminus, the 425-residue chain is Histidine--tRNA ligase (425 aa).

Belongs to the class-II aminoacyl-tRNA synthetase family. As to quaternary structure, homodimer.

It is found in the cytoplasm. The catalysed reaction is tRNA(His) + L-histidine + ATP = L-histidyl-tRNA(His) + AMP + diphosphate + H(+). This is Histidine--tRNA ligase from Desulforapulum autotrophicum (strain ATCC 43914 / DSM 3382 / VKM B-1955 / HRM2) (Desulfobacterium autotrophicum).